Consider the following 1732-residue polypeptide: MSGEVRLRQLEQFILDGPAQTNGQCFSVETLLDILICLYDECNNSPLRREKNILEYLEWAKPFTSKVKQMRLHREDFEILKVIGRGAFGEVAVVKLKNADKVFAMKILNKWEMLKRAETACFREERDVLVNGDNKWITTLHYAFQDDNNLYLVMDYYVGGDLLTLLSKFEDRLPEDMARFYLAEMVIAIDSVHQLHYVHRDIKPDNILMDMNGHIRLADFGSCLKLMEDGTVQSSVAVGTPDYISPEILQAMEDGKGRYGPECDWWSLGVCMYEMLYGETPFYAESLVETYGKIMNHKERFQFPAQVTDVSENAKDLIRRLICSREHRLGQNGIEDFKKHPFFSGIDWDNIRNCEAPYIPEVSSPTDTSNFDVDDDCLKNSETMPPPTHTAFSGHHLPFVGFTYTSSCVLSDRSCLRVTAGPTSLDLDVNVQRTLDNNLATEAYERRIKRLEQEKLELSRKLQESTQTVQALQYSTVDGPLTASKDLEIKNLKEEIEKLRKQVTESSHLEQQLEEANAVRQELDDAFRQIKAYEKQIKTLQQEREDLNKELVQASERLKNQSKELKDAHCQRKLAMQEFMEINERLTELHTQKQKLARHVRDKEEEVDLVMQKVESLRQELRRTERAKKELEVHTEALAAEASKDRKLREQSEHYSKQLENELEGLKQKQISYSPGVCSIEHQQEITKLKTDLEKKSIFYEEELSKREGIHANEIKNLKKELHDSEGQQLALNKEIMILKDKLEKTRRESQSEREEFESEFKQQYEREKVLLTEENKKLTSELDKLTTLYENLSIHNQQLEEEVKDLADKKESVAHWEAQITEIIQWVSDEKDARGYLQALASKMTEELEALRNSSLGTRATDMPWKMRRFAKLDMSARLELQSALDAEIRAKQAIQEELNKVKASNIITECKLKDSEKKNLELLSEIEQLIKDTEELRSEKGIEHQDSQHSFLAFLNTPTDALDQFERSPSCTPASKGRRTVDSTPLSVHTPTLRKKGCPGSTGFPPKRKTHQFFVKSFTTPTKCHQCTSLMVGLIRQGCSCEVCGFSCHITCVNKAPTTCPVPPEQTKGPLGIDPQKGIGTAYEGHVRIPKPAGVKKGWQRALAIVCDFKLFLYDIAEGKASQPSVVISQVIDMRDEEFSVSSVLASDVIHASRKDIPCIFRVTASQLSASNNKCSILMLADTENEKNKWVGVLSELHKILKKNKFRDRSVYVPKEAYDSTLPLIKTTQAAAIIDHERIALGNEEGLFVVHVTKDEIIRVGDNKKIHQIELIPNDQLVAVISGRNRHVRLFPMSALDGRETDFYKLSETKGCQTVTSGKVRHGALTCLCVAMKRQVLCYELFQSKTRHRKFKEIQVPYNVQWMAIFSEQLCVGFQSGFLRYPLNGEGNPYSMLHSNDHTLSFIAHQPMDAICAVEISSKEYLLCFNSIGIYTDCQGRRSRQQELMWPANPSSCCYNAPYLSVYSENAVDIFDVNSMEWIQTLPLKKVRPLNNEGSLNLLGLETIRLIYFKNKMAEGDELVVPETSDNSRKQMVRNINNKRRYSFRVPEEERMQQRREMLRDPEMRNKLISNPTNFNHIAHMGPGDGIQILKDLPMNPRPQESRTVFSGSVSIPSITKSRPEPGRSMSASSGLSARSSAQNGSALKREFSGGSYSAKRQPMPSPSEGSLSSGGMDQGSDAPARDFDGEDSDSPRHSTASNSSNLSSPPSPASPRKTKSLSLESTDRGSWDP.

The 267-residue stretch at 77 to 343 folds into the Protein kinase domain; it reads FEILKVIGRG…IEDFKKHPFF (267 aa). Residues 83–91 and lysine 106 each bind ATP; that span reads IGRGAFGEV. The active-site Proton acceptor is the aspartate 201. Phosphoserine; by autocatalysis is present on residues serine 222 and serine 234. A Phosphothreonine; by autocatalysis modification is found at threonine 240. Residues 344-414 enclose the AGC-kinase C-terminal domain; it reads SGIDWDNIRN…TSSCVLSDRS (71 aa). 2 coiled-coil regions span residues 437 to 820 and 880 to 943; these read NNLA…WEAQ and LELQ…SEKG. The disordered stretch occupies residues 968-1003; sequence ERSPSCTPASKGRRTVDSTPLSVHTPTLRKKGCPGS. The segment at 1012–1062 adopts a Phorbol-ester/DAG-type zinc-finger fold; it reads THQFFVKSFTTPTKCHQCTSLMVGLIRQGCSCEVCGFSCHITCVNKAPTTC. Residues 1082–1201 enclose the PH domain; sequence GTAYEGHVRI…WVGVLSELHK (120 aa). Position 1127 is a phosphoserine (serine 1127). The CNH domain maps to 1227-1499; that stretch reads IKTTQAAAII…RPLNNEGSLN (273 aa). Serine 1545 carries the post-translational modification Phosphoserine. The 14-residue stretch at 1571–1584 folds into the CRIB domain; that stretch reads ISNPTNFNHIAHMG. Positions 1591 to 1732 are disordered; it reads ILKDLPMNPR…ESTDRGSWDP (142 aa). A compositionally biased stretch (polar residues) spans 1604–1619; it reads SRTVFSGSVSIPSITK. Residues serine 1611, serine 1613, serine 1629, serine 1651, serine 1664, serine 1669, and serine 1693 each carry the phosphoserine modification. Positions 1625–1640 are enriched in low complexity; the sequence is GRSMSASSGLSARSSA. The span at 1665–1674 shows a compositional bias: low complexity; it reads PSEGSLSSGG. Positions 1697-1707 are enriched in low complexity; the sequence is STASNSSNLSS. Serine 1719 and serine 1721 each carry phosphoserine.

This sequence belongs to the protein kinase superfamily. AGC Ser/Thr protein kinase family. DMPK subfamily. In terms of assembly, homodimer and homotetramer via the coiled coil regions. Interacts tightly with GTP-bound but not GDP-bound CDC42. Forms a tripartite complex with MYO18A and LURAP1 with the latter acting as an adapter connecting CDC42BPA and MYO18A. LURAP1 binding results in activation of CDC42BPA by abolition of its negative autoregulation. Interacts with LURAP1. Interacts (via AGC-kinase C-terminal domain) with FAM89B/LRAP25 (via LRR repeat). Forms a tripartite complex with FAM89B/LRAP25 and LIMK1. It depends on Mg(2+) as a cofactor. In terms of processing, proteolytically cleaved by caspases upon apoptosis induction. The cleavage at Asp-478 by CASP3 increases its kinase activity (in vitro). Abundant in the heart, brain, skeletal muscle, kidney, and pancreas, with little or no expression in the lung and liver.

It localises to the cytoplasm. The protein resides in the cell projection. The protein localises to the lamellipodium. It catalyses the reaction L-seryl-[protein] + ATP = O-phospho-L-seryl-[protein] + ADP + H(+). It carries out the reaction L-threonyl-[protein] + ATP = O-phospho-L-threonyl-[protein] + ADP + H(+). Maintained in an inactive, closed conformation by an interaction between the kinase domain and the negative autoregulatory C-terminal coiled-coil region. Agonist binding to the phorbol ester binding site disrupts this, releasing the kinase domain to allow N-terminus-mediated dimerization and kinase activation by transautophosphorylation. Inhibited by chelerythrine chloride. Functionally, serine/threonine-protein kinase which is an important downstream effector of CDC42 and plays a role in the regulation of cytoskeleton reorganization and cell migration. Regulates actin cytoskeletal reorganization via phosphorylation of PPP1R12C and MYL9/MLC2. In concert with MYO18A and LURAP1, is involved in modulating lamellar actomyosin retrograde flow that is crucial to cell protrusion and migration. Phosphorylates: PPP1R12A, LIMK1 and LIMK2. May play a role in TFRC-mediated iron uptake. In concert with FAM89B/LRAP25 mediates the targeting of LIMK1 to the lamellipodium resulting in its activation and subsequent phosphorylation of CFL1 which is important for lamellipodial F-actin regulation. Triggers the formation of an extrusion apical actin ring required for epithelial extrusion of apoptotic cells. The polypeptide is Serine/threonine-protein kinase MRCK alpha (Homo sapiens (Human)).